A 288-amino-acid chain; its full sequence is Prohibitin-1, mitochondrial (288 aa).

The Mitochondrial matrix portion of the chain corresponds to 1–10 (MNNVKVPKIP). The helical; Signal-anchor for type II membrane protein transmembrane segment at 11-30 (GGGAISTLLKVGIIGGLGLY) threads the bilayer. The Mitochondrial intermembrane segment spans residues 31-288 (GATHSLYNVE…GMNLDVDAKN (258 aa)). Residues 186–219 (KEFTAAIEAKQVAAQEAERAKFIVEKAEQDKRSA) are a coiled coil.

This sequence belongs to the prohibitin family. As to quaternary structure, component of a prohibitin multimeric complex in mitochondrial membranes. In terms of tissue distribution, mostly expressed in proliferative tissues, including vasculature, shoot and root apical tissues.

It is found in the mitochondrion inner membrane. Functionally, prohibitin probably acts as a holdase/unfoldase for the stabilization of newly synthesized mitochondrial proteins. The polypeptide is Prohibitin-1, mitochondrial (PHB1) (Arabidopsis thaliana (Mouse-ear cress)).